Reading from the N-terminus, the 64-residue chain is Large ribosomal subunit protein bL35 (64 aa).

Residues 1 to 42 (MPKAKTHSGASKRFRRTGTGKIVRQKANRRHLLEHKSSKRTR) are compositionally biased toward basic residues. Positions 1-64 (MPKAKTHSGA…TKRVKSLLNG (64 aa)) are disordered.

It belongs to the bacterial ribosomal protein bL35 family.

This Mycobacterium ulcerans (strain Agy99) protein is Large ribosomal subunit protein bL35.